The primary structure comprises 240 residues: Large ribosomal subunit protein uL2 (240 aa).

The segment at 199–240 (DHPFGGGGRQHPGRPKSVSRDAAPGRKVGDIASKRTGRGGNE) is disordered. A compositionally biased stretch (basic and acidic residues) spans 221 to 231 (APGRKVGDIAS).

This sequence belongs to the universal ribosomal protein uL2 family. Part of the 50S ribosomal subunit. Forms a bridge to the 30S subunit in the 70S ribosome.

In terms of biological role, one of the primary rRNA binding proteins. Required for association of the 30S and 50S subunits to form the 70S ribosome, for tRNA binding and peptide bond formation. It has been suggested to have peptidyltransferase activity; this is somewhat controversial. Makes several contacts with the 16S rRNA in the 70S ribosome. This Halobacterium salinarum (strain ATCC 29341 / DSM 671 / R1) protein is Large ribosomal subunit protein uL2.